Consider the following 110-residue polypeptide: Nucleoid-associated protein Sfri_2406 (110 aa).

It belongs to the YbaB/EbfC family. As to quaternary structure, homodimer.

Its subcellular location is the cytoplasm. The protein resides in the nucleoid. Binds to DNA and alters its conformation. May be involved in regulation of gene expression, nucleoid organization and DNA protection. The sequence is that of Nucleoid-associated protein Sfri_2406 from Shewanella frigidimarina (strain NCIMB 400).